Reading from the N-terminus, the 473-residue chain is MSKGQVIQVMGPVVDVKFEGGNLPEIYNALVIEYKSDAEEAPTSQLTLEVAIQLGDDVVRTIAMASTDGVQRGMEVIDTGSPITVPVGTVTLGRVFNVLGNTIDLDEPLPSDIKRNKIHREAPTFDQLATTTEILETGIKVVDLLAPYLKGGKIGLFGGAGVGKTVLIQELIHNIAQEHGGISVFAGVGERTREGNDLYFEMKDSGVIEKTAMVFGQMNEPPGARMRVALTGLTIAEYFRDEEHQDVLLFIDNIFRFTQAGSEVSALLGRMPSAVGYQPTLATEMGQLQERITSTNVGSVTSIQAIYVPADDYTDPAPATTFAHLDATTNLERKLTEQGIYPAVDPLASTSRALSPDIVGEEHYAVATEVQRLLQRYKELQDIIAILGMDELSDEDKQSVSRARRVQFFLSQNFHVAEQFTGQKGSYVPVKETVKGFKDLLAGKYDHIPEDAFRSVGRIEDVLEKAKDMGVEV.

158–165 contributes to the ATP binding site; that stretch reads GGAGVGKT.

Belongs to the ATPase alpha/beta chains family. F-type ATPases have 2 components, CF(1) - the catalytic core - and CF(0) - the membrane proton channel. CF(1) has five subunits: alpha(3), beta(3), gamma(1), delta(1), epsilon(1). CF(0) has three main subunits: a(1), b(2) and c(9-12). The alpha and beta chains form an alternating ring which encloses part of the gamma chain. CF(1) is attached to CF(0) by a central stalk formed by the gamma and epsilon chains, while a peripheral stalk is formed by the delta and b chains.

The protein localises to the cell membrane. It carries out the reaction ATP + H2O + 4 H(+)(in) = ADP + phosphate + 5 H(+)(out). In terms of biological role, produces ATP from ADP in the presence of a proton gradient across the membrane. The catalytic sites are hosted primarily by the beta subunits. The polypeptide is ATP synthase subunit beta 2 (Listeria monocytogenes serotype 4b (strain F2365)).